The sequence spans 176 residues: Urease accessory protein UreE (176 aa).

The disordered stretch occupies residues 134-176 (EAGAYGSGGHHHHGESSQGHAHGPLAPIPVHQKIHRPSDIPSR).

Belongs to the UreE family.

The protein resides in the cytoplasm. Involved in urease metallocenter assembly. Binds nickel. Probably functions as a nickel donor during metallocenter assembly. The polypeptide is Urease accessory protein UreE (Nitrosospira multiformis (strain ATCC 25196 / NCIMB 11849 / C 71)).